Consider the following 531-residue polypeptide: Zinc finger C2HC domain-containing protein 1C (531 aa).

A disordered region spans residues 16-45; that stretch reads MLPHNTTEAPGPHSAKQDSYEQSDSSQQSL. Residues 35 to 44 show a composition bias toward low complexity; it reads YEQSDSSQQS. A coiled-coil region spans residues 209 to 264; that stretch reads VQIRRLEAAGESLEEEIRRKQILLRGKLKKTEEELRRIQTQKEQAKENENRELQKI. 2 disordered regions span residues 290 to 318 and 334 to 387; these read FEEEFSRDKREDETWERSQQNSSPFQLSD and NKIR…PQLG. Over residues 293 to 305 the composition is skewed to basic and acidic residues; that stretch reads EFSRDKREDETWE. Residues 306–315 are compositionally biased toward polar residues; it reads RSQQNSSPFQ. Residues 335 to 345 are compositionally biased toward basic and acidic residues; it reads KIRDRVSEPSM. The span at 366 to 380 shows a compositional bias: low complexity; the sequence is SSLSMAPDSSGSSGS. 2 C2HC/C3H-type zinc fingers span residues 385–414 and 493–522; these read QLGECSHCGRKFLLFRLERHSNICSRMQGS and DYIQCPHCSHHFAPKVAEQHIPKCKTIKNR. Zn(2+) is bound by residues Cys-389, Cys-392, His-404, Cys-408, Cys-497, Cys-500, His-512, and Cys-516.

The protein belongs to the ZC2HC1 family. Zn(2+) serves as cofactor.

This chain is Zinc finger C2HC domain-containing protein 1C (ZC2HC1C), found in Macaca fascicularis (Crab-eating macaque).